Here is a 235-residue protein sequence, read N- to C-terminus: Large ribosomal subunit protein uL3 (235 aa).

At Gln151 the chain carries N5-methylglutamine.

This sequence belongs to the universal ribosomal protein uL3 family. As to quaternary structure, part of the 50S ribosomal subunit. Forms a cluster with proteins L14 and L19. Methylated by PrmB.

Functionally, one of the primary rRNA binding proteins, it binds directly near the 3'-end of the 23S rRNA, where it nucleates assembly of the 50S subunit. This Rhodospirillum rubrum (strain ATCC 11170 / ATH 1.1.1 / DSM 467 / LMG 4362 / NCIMB 8255 / S1) protein is Large ribosomal subunit protein uL3.